The chain runs to 233 residues: Uracil-DNA glycosylase (233 aa).

D70 functions as the Proton acceptor in the catalytic mechanism.

Belongs to the uracil-DNA glycosylase (UDG) superfamily. UNG family.

The protein localises to the cytoplasm. It catalyses the reaction Hydrolyzes single-stranded DNA or mismatched double-stranded DNA and polynucleotides, releasing free uracil.. In terms of biological role, excises uracil residues from the DNA which can arise as a result of misincorporation of dUMP residues by DNA polymerase or due to deamination of cytosine. This Helicobacter pylori (strain Shi470) protein is Uracil-DNA glycosylase.